Consider the following 85-residue polypeptide: Large ribosomal subunit protein bL27 (85 aa).

Residues 1–20 (MAHKKAGGSTRNGRDSESKR) are disordered.

This sequence belongs to the bacterial ribosomal protein bL27 family.

This is Large ribosomal subunit protein bL27 from Yersinia enterocolitica serotype O:8 / biotype 1B (strain NCTC 13174 / 8081).